Consider the following 273-residue polypeptide: MTLQDQIIKELGVKPVINPSQEIRRSVEFLKDYLLKHSFLKTYVLGISGGQDSTLAGRLAQLAVEELRADTGENYQFIAIRLPYGIQADEEDAQKALDFIKPDIALTINIKEAVDGQVRALNAAGVEITDFNKGNIKARQRMISQYAVAGQYAGAVIGTDHAAENITGFFTKFGDGGADLLPLFRLNKSQGKQLLAELGADKALYEKIPTADLEENKPGIADEIALGVTYQEIDAYLEGKVVSDKSRGIIENWWYKGQHKRHLPITIFDDFWK.

46-53 (GISGGQDS) contacts ATP. Residue D52 coordinates Mg(2+). R139 provides a ligand contact to deamido-NAD(+). T159 contacts ATP. Residue E164 participates in Mg(2+) binding. The deamido-NAD(+) site is built by K172 and D179. ATP-binding residues include K188 and T210. 259–260 (HK) is a deamido-NAD(+) binding site.

Belongs to the NAD synthetase family. Homodimer.

The enzyme catalyses deamido-NAD(+) + NH4(+) + ATP = AMP + diphosphate + NAD(+) + H(+). Its pathway is cofactor biosynthesis; NAD(+) biosynthesis; NAD(+) from deamido-NAD(+) (ammonia route): step 1/1. Its function is as follows. Catalyzes the ATP-dependent amidation of deamido-NAD to form NAD. Uses ammonia as a nitrogen source. This chain is NH(3)-dependent NAD(+) synthetase, found in Streptococcus agalactiae serotype Ia (strain ATCC 27591 / A909 / CDC SS700).